The following is a 478-amino-acid chain: Membrane-bound lytic murein transglycosylase F (478 aa).

Residues 1–22 form the signal peptide; the sequence is MTRFLFAIILGFLLTACQQVTV. The non-LT domain stretch occupies residues 23–257; that stretch reads EETEYVPHKL…HLNEKYFGHV (235 aa). The segment at 258-478 is LT domain; the sequence is KRFDYIDTRA…PGTLSPDKPK (221 aa). Residue E302 is part of the active site. The interval 446-478 is disordered; the sequence is SKQQNSDEEEPSDLASEDGPAPVPGTLSPDKPK. The span at 451 to 461 shows a compositional bias: acidic residues; it reads SDEEEPSDLAS.

It in the N-terminal section; belongs to the bacterial solute-binding protein 3 family. In the C-terminal section; belongs to the transglycosylase Slt family.

The protein localises to the cell outer membrane. The catalysed reaction is Exolytic cleavage of the (1-&gt;4)-beta-glycosidic linkage between N-acetylmuramic acid (MurNAc) and N-acetylglucosamine (GlcNAc) residues in peptidoglycan, from either the reducing or the non-reducing ends of the peptidoglycan chains, with concomitant formation of a 1,6-anhydrobond in the MurNAc residue.. Its function is as follows. Murein-degrading enzyme that degrades murein glycan strands and insoluble, high-molecular weight murein sacculi, with the concomitant formation of a 1,6-anhydromuramoyl product. Lytic transglycosylases (LTs) play an integral role in the metabolism of the peptidoglycan (PG) sacculus. Their lytic action creates space within the PG sacculus to allow for its expansion as well as for the insertion of various structures such as secretion systems and flagella. The protein is Membrane-bound lytic murein transglycosylase F of Shewanella sp. (strain MR-4).